A 438-amino-acid polypeptide reads, in one-letter code: MAFRDVLNIEVAAGNGGDGSMSFHRAKYMEKGGPDGGHGGRGGSIILRAIEGVESLERLVGRRKFKAENGRYGEGRLRQGADGQDTYIDVPVGTTAFDEDSGKVIADLVNVGQEKVIAKGGLGGRGNSTFTSSTRQAPRFAELGTPGQKRRVRLELRLIADVGLVGYPNAGKSSLLAALSRANPAIADYPFTTLSPILGVVQREDEQGVSLDERFTMADIPGIIEGASEGKGLGLEFLRHISRTRLLVYVLDVTRNPVEELQQLQAELRAYDPSLLDNVALVALNKVELVEPDLAQMVEDELAEQGLPVLQVSAKEGTGLNTLRETLFQLLPEFELWAQSNALEVEPDTVVDEALQIVFREDAPAKGEGAPERVWEVHGGGFEERIVRFSRYLEDAAEYLGNLFKRQGLYNALRRAGAREGDTVEIGTFRFEYFDDEE.

An Obg domain is found at 1–159 (MAFRDVLNIE…RRVRLELRLI (159 aa)). In terms of domain architecture, OBG-type G spans 160 to 332 (ADVGLVGYPN…LRETLFQLLP (173 aa)). Residues 166–173 (GYPNAGKS), 191–195 (FTTLS), 219–222 (DIPG), 285–288 (NKVE), and 313–315 (SAK) contribute to the ATP site. Positions 173 and 193 each coordinate Mg(2+). In terms of domain architecture, OCT spans 357 to 435 (IVFREDAPAK…IGTFRFEYFD (79 aa)).

Belongs to the TRAFAC class OBG-HflX-like GTPase superfamily. OBG GTPase family. Monomer. Mg(2+) is required as a cofactor.

Its subcellular location is the cytoplasm. An essential GTPase which binds GTP, GDP and possibly (p)ppGpp with moderate affinity, with high nucleotide exchange rates and a fairly low GTP hydrolysis rate. Plays a role in control of the cell cycle, stress response, ribosome biogenesis and in those bacteria that undergo differentiation, in morphogenesis control. The protein is GTPase Obg of Deinococcus radiodurans (strain ATCC 13939 / DSM 20539 / JCM 16871 / CCUG 27074 / LMG 4051 / NBRC 15346 / NCIMB 9279 / VKM B-1422 / R1).